A 150-amino-acid polypeptide reads, in one-letter code: MKKNYYIGACIALILSGPTFAQGEMHNTNEQIAEQSSVDLIAEIYHSDRYAETFVESEQFEQEESTSKEPILFVTPYDQLKDKLESWADLHGYVVKWNTQKTVQFDNAVAYEGDFEQVLTELASDINQIGIDINFKIFQKNKVIVVYSVR.

Involved in TCP pilus biogenesis. This is Toxin coregulated pilus biosynthesis protein Q (tcpQ) from Vibrio cholerae serotype O1 (strain ATCC 39315 / El Tor Inaba N16961).